Here is a 155-residue protein sequence, read N- to C-terminus: Large ribosomal subunit protein uL22 (155 aa).

It belongs to the universal ribosomal protein uL22 family. In terms of assembly, part of the 50S ribosomal subunit.

In terms of biological role, this protein binds specifically to 23S rRNA. It makes multiple contacts with different domains of the 23S rRNA in the assembled 50S subunit and ribosome. Functionally, the globular domain of the protein is located near the polypeptide exit tunnel on the outside of the subunit, while an extended beta-hairpin is found that lines the wall of the exit tunnel in the center of the 70S ribosome. This is Large ribosomal subunit protein uL22 from Pyrococcus horikoshii (strain ATCC 700860 / DSM 12428 / JCM 9974 / NBRC 100139 / OT-3).